Reading from the N-terminus, the 475-residue chain is Sulfate adenylyltransferase subunit 1 (475 aa).

One can recognise a tr-type G domain in the interval Lys-25 to Arg-239. Positions Gly-34–Ser-41 are G1. Gly-34–Ser-41 provides a ligand contact to GTP. A G2 region spans residues Gly-92–Asp-96. The G3 stretch occupies residues Asp-113–Gly-116. GTP contacts are provided by residues Asp-113–His-117 and Asn-168–Asp-171. The segment at Asn-168–Asp-171 is G4. The interval Ser-206 to Leu-208 is G5.

Belongs to the TRAFAC class translation factor GTPase superfamily. Classic translation factor GTPase family. CysN/NodQ subfamily. As to quaternary structure, heterodimer composed of CysD, the smaller subunit, and CysN.

It carries out the reaction sulfate + ATP + H(+) = adenosine 5'-phosphosulfate + diphosphate. Its pathway is sulfur metabolism; hydrogen sulfide biosynthesis; sulfite from sulfate: step 1/3. Functionally, with CysD forms the ATP sulfurylase (ATPS) that catalyzes the adenylation of sulfate producing adenosine 5'-phosphosulfate (APS) and diphosphate, the first enzymatic step in sulfur assimilation pathway. APS synthesis involves the formation of a high-energy phosphoric-sulfuric acid anhydride bond driven by GTP hydrolysis by CysN coupled to ATP hydrolysis by CysD. The polypeptide is Sulfate adenylyltransferase subunit 1 (Escherichia coli O9:H4 (strain HS)).